The sequence spans 196 residues: Hypoxanthine/guanine phosphoribosyltransferase (196 aa).

It belongs to the purine/pyrimidine phosphoribosyltransferase family. Archaeal HPRT subfamily. Homodimer.

Its subcellular location is the cytoplasm. It catalyses the reaction IMP + diphosphate = hypoxanthine + 5-phospho-alpha-D-ribose 1-diphosphate. It carries out the reaction GMP + diphosphate = guanine + 5-phospho-alpha-D-ribose 1-diphosphate. The protein operates within purine metabolism; IMP biosynthesis via salvage pathway; IMP from hypoxanthine: step 1/1. Its function is as follows. Catalyzes a salvage reaction resulting in the formation of IMP that is energically less costly than de novo synthesis. This is Hypoxanthine/guanine phosphoribosyltransferase from Methanocaldococcus sp. (strain FS406-22).